Consider the following 128-residue polypeptide: MGLIWGLFSVIIASVAQLSLGFAASHLPPMTHLWDFIAALLAFGLDARILLLGLLGYLLSVFCWYKTLHKLALSKAYALLSMSYVLVWIASMVLPGWEGTFSLKALLGVACIMSGLMLIFLPMTKQRY.

Residues 1–2 are Cytoplasmic-facing; it reads MG. Residues 3 to 23 traverse the membrane as a helical segment; that stretch reads LIWGLFSVIIASVAQLSLGFA. Topologically, residues 24–35 are periplasmic; that stretch reads ASHLPPMTHLWD. A helical membrane pass occupies residues 36-56; sequence FIAALLAFGLDARILLLGLLG. Over 57–76 the chain is Cytoplasmic; sequence YLLSVFCWYKTLHKLALSKA. Residues 77–97 traverse the membrane as a helical segment; it reads YALLSMSYVLVWIASMVLPGW. The Periplasmic segment spans residues 98-100; that stretch reads EGT. A helical membrane pass occupies residues 101-121; the sequence is FSLKALLGVACIMSGLMLIFL. The Cytoplasmic segment spans residues 122 to 128; that stretch reads PMTKQRY.

This sequence belongs to the ArnF family. As to quaternary structure, heterodimer of ArnE and ArnF.

Its subcellular location is the cell inner membrane. Its pathway is bacterial outer membrane biogenesis; lipopolysaccharide biosynthesis. In terms of biological role, translocates 4-amino-4-deoxy-L-arabinose-phosphoundecaprenol (alpha-L-Ara4N-phosphoundecaprenol) from the cytoplasmic to the periplasmic side of the inner membrane. This is Probable 4-amino-4-deoxy-L-arabinose-phosphoundecaprenol flippase subunit ArnF from Escherichia coli O9:H4 (strain HS).